A 355-amino-acid polypeptide reads, in one-letter code: UDP-N-acetylglucosamine--N-acetylmuramyl-(pentapeptide) pyrophosphoryl-undecaprenol N-acetylglucosamine transferase (355 aa).

Residues 15 to 17 (TGG), Asn127, Arg163, Ser191, Ile244, 263 to 268 (ALTVSE), and Gln288 contribute to the UDP-N-acetyl-alpha-D-glucosamine site.

This sequence belongs to the glycosyltransferase 28 family. MurG subfamily.

It localises to the cell inner membrane. The enzyme catalyses di-trans,octa-cis-undecaprenyl diphospho-N-acetyl-alpha-D-muramoyl-L-alanyl-D-glutamyl-meso-2,6-diaminopimeloyl-D-alanyl-D-alanine + UDP-N-acetyl-alpha-D-glucosamine = di-trans,octa-cis-undecaprenyl diphospho-[N-acetyl-alpha-D-glucosaminyl-(1-&gt;4)]-N-acetyl-alpha-D-muramoyl-L-alanyl-D-glutamyl-meso-2,6-diaminopimeloyl-D-alanyl-D-alanine + UDP + H(+). Its pathway is cell wall biogenesis; peptidoglycan biosynthesis. In terms of biological role, cell wall formation. Catalyzes the transfer of a GlcNAc subunit on undecaprenyl-pyrophosphoryl-MurNAc-pentapeptide (lipid intermediate I) to form undecaprenyl-pyrophosphoryl-MurNAc-(pentapeptide)GlcNAc (lipid intermediate II). The chain is UDP-N-acetylglucosamine--N-acetylmuramyl-(pentapeptide) pyrophosphoryl-undecaprenol N-acetylglucosamine transferase from Escherichia coli O157:H7.